Consider the following 3086-residue polypeptide: MMNFGSLNVGLKQVDGTWVPRVFEEKEMARLLAEKQHARVMRATQEMMKAPNPFAEFDEMHQRGNPFAGRVRKCETREPKSAQKPIVTVDTVPVAIYTDVIWPENGKVHALSRRRAPRKHARRSKILACDLLTQVLNISRRAGKSVEVIGKRRCCLKPRRRDGKSCFGVITKHHKGVLSSRDMVKDLFVDSIIEHIAYTGHTPLIDAADIKPGDSGLIYREKKDGYVTRVVRGRHDGDIIDARDYVRAGIHTIKHYSDDGKSLVKYAPYCQPSHHTFGHMCRVTWSDTEILQFREMLSQAIMPQRDPRCDICAEVAGQRTKDEILQHARTSQMMQMLEFGKEDERWKAPRRVMETLLEESNWPSMDYSTSSEITTICCGNNDEPFRRIYSIMKVLAEPNLADVSAWQEANSSLLQLARYMKNREMSVQAGNSATFTNPFPPTVHTFGPTNNGADILQGPWDNWGDKQPIALAFFEKHFNKWQINEFSIDRRVRKHIRGTRKLALMDLNQSRSIKDLEDHVQEEEIPYERKTESCITMYKDQYLYSCSCVTARDGKPYLSMRYLQATGLIPIARGADVQHMPNSDSWQGFYYVAPEGYCYINIFLPMLALAPYYKVGKLSELIGKLIKVLGKWPKLKDVALACLYITEYHTYAQNALLPPILVHHSTRTMHVVDTLGSLSVGYHVLKAGTVKHLVNLASRLATGEMLDYNVGGSLGGIHAYDLLIRSTFDHVLLERALETDPYYILYSALSPTVLKQMYTSKSYANALRVFVRSNQSLFQVVCTLENLARRMTRAQSIEQQIMQLQSLYPQLLDMLADNIPDSPLSWLSHHVTTDSMQRAIELNNCDIELARGGYASINTSWRKKKEQYYADLIKEYYNALSPQAKIFVSRAYIGYLHATTPLFANARKISSEIASNICTQAYSRTIGRGISIVSSGGRKGKTWLTARGDSFYKTMISRAIKLYTPEVSAVIGVATVVGILLSTMTTLHTYLVKNKQTAQKTNEKFEELMYDKVALYIPKYDAEHSHLQGKDLDFEHFARWLMARDKKLSSFVQSHLVDTVTHQAKDDTNVWIEKCIATIVLMMMAIDSNKSDKLYQILCKLRTVFSTMGQTVVTHQSIDEILDIDESKRTTIDFERVEVMQPTQPILKTTFEGFWDMQIQMGRTVAHYRTTGRLVELTRENIAEVVATISSDTANAEFIVRGGVGTGKSTSLPTALCERGRVLMLEPTRPLTENVAQQLRGEPHFKSPSVHMRGLNTFGSSRITIMTSGYALHYYANNRQLLRDFEFIMFDECHVMDSSAMAFYSLCNDAKVAAKLLKVSATPAGRECEFKPMFPVRVSEAAQLSFESFVTAQGSKSTYDIIQYGNNILVYVASYNEVDKLAAMLLEKRFRVTKVDGRTMKLNTHGIELHGTAQVKHFIVATNIIENGVTLEIDCLVDFGTKVVAQLDTEGRRIMYMKVPISYGERIQRLGRVGRTKPGARLKVGHTMRGIVEIPEVIATEAAFQCFMYDLPVMTGQVSVSLLSKCTREQARTMAAFELSPFTMSNLVAFDGTMHPAIHDLLKKFKLRDSTVVLRRTALPLRASASWYTVREYETIIGDLHIENKDVRIPFVANDLSNSLLEGLWDAIQCNRSDVSTTKLTTVSANKIAYTLKTDTSSIQRTISIIDDLLAEERKKQEMFTHHLSTTSGGYTFGLNAIAMCIKSRYAKGYCIENIATLTNVRNQLTEFSGMSEDQYTSEIIQNYPDLTLVHHQSKQEIIRNLKLKAKYDQTLIASDLLLGTAVLIGGGAMLYKTFMTETNTRVHLEGDGKRQREKLQYRAARDSKQDYEVYADEREIQENYGEAYTKHGRKGPAHEKGTGSKTREFTNFYGFDPAEYDTVRLVDPITGKTCDKAVRDLLRMRDVADTFAEIRESMDEDMILQPGVNFAPALIEAYFMNSRTNAARRVDLVPHNPMQVGRLSNNIAGFPTHDGELRQSRPSRPIQKDQVPAANEYSVQHESKSIAKGLRDYHPVSSNLCALEYYCGDMRTSIYGVCYGPYILTTAHLIKEKGGWLKIRTKHGLFKLEAMDRVQIRELCGSDIIVIKGPKDMPPAPMRLKFRAPKSGERAVLVGFVDDNLDRQLVSDSSAVYRRENTGFWKHWITTKYGNCGLPMVSVDTMDIIGLHSLGAQNSNENYFAALTDDFSKQFFEPETDVPWQRKWSYNADKVNYGTMDLTSNQPSGAFKTTKLLEDLLEAVSHQSQEYTWLTKYCGANLLVIGKCPGNLITKHVIKGKSPTFDLFLSVDAQASDFFKPLMGDYAPSRLNREAFVKDITKYDTEIPIGNLSITDFENAVEDTYYILKDSGIEQCNYITDAIPIFDSMNMKAATGALYGGKKKDYFENYTDDMKQNILKESYIRLREGKMGIWNGSLKAELRSKEKVEANKTRVFTAAPLDTLLAGKGCVDDFNNQFYAAHLKGPWTVGITKFFGRWNDFLSELPPGWDYFDADGSRFDSSLTPFLLNAVLNIRKKFMINWAFGQRCLGNLYTEIIYTPIATPDGSVVKKMRGNNSGQPSTVVDNTIMVIIAMQYAISKAEFPAGRLRDQIRYFANGDDLVVAVEPSLSDKISSFSASFAELGLSYDFSNKVNDRSELQFMSHTGKLIDGMYIPMLERERICAILEWSRSDEPQFQLDAISAAMIEAWGDDELLYQIRRYYSWLLEQEPYKSIAELGHAPYLAEAALKALYTGKDPDAELIAIYERAMLNTPPTEDRPTKVVHEANVTAASSAATQTSTTSPTVTSTSGASTSTSSGTTSAPLASTTPPVSATTTPSTGTTAPTTPTVRAANLPDIAGHRKAKANGESQLNVRGENDDEDVPAASEFALPRLPTLGAKIRVPKFKGAIVLNKDHLIKYTPDQRDLSNTRATQEQFEKWYSGVRNEVEKTDEEMALLLNGSMVWCMENGTSPDLSGSWTMMEGEEQIAYPLEPFCRHAQPTLRSIMAHFSDAATAYVVLRNQKSRYMPRYGLKRGLNDYSLAPYAFDFYEITSTSPLRARERHAQMKAAAIRGKASRMFGLDGNVSAQSENTERHTVEDVNTRVHSLSGANML.

Residues 122–256 (RRSKILACDL…RAGIHTIKHY (135 aa)) enclose the Peptidase S30 domain. Residues H173, D182, and S215 each act as for P1 proteinase activity in the active site. The Peptidase C6 domain occupies 590-711 (YYVAPEGYCY…TGEMLDYNVG (122 aa)). Residues C598 and H670 each act as for helper component proteinase activity in the active site. The Helicase ATP-binding domain maps to 1189 to 1341 (ISSDTANAEF…PMFPVRVSEA (153 aa)). 1202 to 1209 (GGVGTGKS) contacts ATP. Residues 1291 to 1294 (DECH) carry the DEAH box motif. An O-(5'-phospho-RNA)-tyrosine modification is found at Y1870. Positions 1970–1990 (HDGELRQSRPSRPIQKDQVPA) are disordered. Residues 2000–2217 (SKSIAKGLRD…VNYGTMDLTS (218 aa)) enclose the Peptidase C4 domain. Catalysis depends on for nuclear inclusion protein A activity residues H2045, D2080, and C2149. The RdRp catalytic domain occupies 2482-2606 (WDYFDADGSR…AVEPSLSDKI (125 aa)). Over residues 2762–2821 (TAASSAATQTSTTSPTVTSTSGASTSTSSGTTSAPLASTTPPVSATTTPSTGTTAPTTPT) the composition is skewed to low complexity. The tract at residues 2762–2822 (TAASSAATQT…GTTAPTTPTV (61 aa)) is disordered. Position 3069 is a phosphothreonine (T3069).

This sequence belongs to the potyviridae genome polyprotein family. VPg is uridylylated by the polymerase and is covalently attached to the 5'-end of the genomic RNA. This uridylylated form acts as a nucleotide-peptide primer for the polymerase. In terms of processing, genome polyprotein of potyviruses undergoes post-translational proteolytic processing by the main proteinase NIa-pro resulting in the production of at least ten individual proteins. The P1 proteinase and the HC-pro cleave only their respective C-termini autocatalytically. 6K1 is essential for proper proteolytic separation of P3 from CI.

It is found in the host cytoplasmic vesicle membrane. The protein resides in the host cytoplasmic vesicle. It localises to the virion. The enzyme catalyses RNA(n) + a ribonucleoside 5'-triphosphate = RNA(n+1) + diphosphate. It carries out the reaction Hydrolyzes glutaminyl bonds, and activity is further restricted by preferences for the amino acids in P6 - P1' that vary with the species of potyvirus, e.g. Glu-Xaa-Xaa-Tyr-Xaa-Gln-|-(Ser or Gly) for the enzyme from tobacco etch virus. The natural substrate is the viral polyprotein, but other proteins and oligopeptides containing the appropriate consensus sequence are also cleaved.. The catalysed reaction is Hydrolyzes a Gly-|-Gly bond at its own C-terminus, commonly in the sequence -Tyr-Xaa-Val-Gly-|-Gly, in the processing of the potyviral polyprotein.. Functionally, required for aphid transmission and also has proteolytic activity. Only cleaves a Gly-Gly dipeptide at its own C-terminus. Interacts with virions and aphid stylets. Acts as a suppressor of RNA-mediated gene silencing, also known as post-transcriptional gene silencing (PTGS), a mechanism of plant viral defense that limits the accumulation of viral RNAs. May have RNA-binding activity. Has helicase activity. It may be involved in replication. Its function is as follows. Indispensable for virus replication. Reduces the abundance of host transcripts related to jasmonic acid biosynthesis therefore altering the host defenses. In order to increase its own stability, decreases host protein degradation pathways. In terms of biological role, indispensable for virus replication. Functionally, mediates the cap-independent, EIF4E-dependent translation of viral genomic RNAs. Binds to the cap-binding site of host EIF4E and thus interferes with the host EIF4E-dependent mRNA export and translation. VPg-RNA directly binds EIF4E and is a template for transcription. Also forms trimeric complexes with EIF4E-EIF4G, which are templates for translation. Has RNA-binding and proteolytic activities. Its function is as follows. An RNA-dependent RNA polymerase that plays an essential role in the virus replication. In terms of biological role, involved in aphid transmission, cell-to-cell and systemis movement, encapsidation of the viral RNA and in the regulation of viral RNA amplification. This chain is Genome polyprotein, found in Dactylis glomerata (Orchard grass).